Consider the following 274-residue polypeptide: Shikimate dehydrogenase (NADP(+)) (274 aa).

Shikimate-binding positions include 14-16 (SLS) and Thr-61. Lys-65 (proton acceptor) is an active-site residue. Shikimate-binding residues include Asn-85 and Asp-106. Residues 130-134 (GAGGA), 153-158 (NRTAER), and Ala-217 each bind NADP(+). Shikimate is bound at residue Tyr-219. Gly-240 is a binding site for NADP(+).

This sequence belongs to the shikimate dehydrogenase family. As to quaternary structure, homodimer.

The catalysed reaction is shikimate + NADP(+) = 3-dehydroshikimate + NADPH + H(+). It participates in metabolic intermediate biosynthesis; chorismate biosynthesis; chorismate from D-erythrose 4-phosphate and phosphoenolpyruvate: step 4/7. In terms of biological role, involved in the biosynthesis of the chorismate, which leads to the biosynthesis of aromatic amino acids. Catalyzes the reversible NADPH linked reduction of 3-dehydroshikimate (DHSA) to yield shikimate (SA). The protein is Shikimate dehydrogenase (NADP(+)) of Halorubrum lacusprofundi (strain ATCC 49239 / DSM 5036 / JCM 8891 / ACAM 34).